We begin with the raw amino-acid sequence, 351 residues long: UDP-N-acetylglucosamine--N-acetylmuramyl-(pentapeptide) pyrophosphoryl-undecaprenol N-acetylglucosamine transferase (351 aa).

Residues 13–15 (TGG), asparagine 125, arginine 161, serine 189, isoleucine 241, 260–265 (ALTVCE), and glutamine 285 contribute to the UDP-N-acetyl-alpha-D-glucosamine site.

Belongs to the glycosyltransferase 28 family. MurG subfamily.

It is found in the cell inner membrane. It catalyses the reaction di-trans,octa-cis-undecaprenyl diphospho-N-acetyl-alpha-D-muramoyl-L-alanyl-D-glutamyl-meso-2,6-diaminopimeloyl-D-alanyl-D-alanine + UDP-N-acetyl-alpha-D-glucosamine = di-trans,octa-cis-undecaprenyl diphospho-[N-acetyl-alpha-D-glucosaminyl-(1-&gt;4)]-N-acetyl-alpha-D-muramoyl-L-alanyl-D-glutamyl-meso-2,6-diaminopimeloyl-D-alanyl-D-alanine + UDP + H(+). It participates in cell wall biogenesis; peptidoglycan biosynthesis. Functionally, cell wall formation. Catalyzes the transfer of a GlcNAc subunit on undecaprenyl-pyrophosphoryl-MurNAc-pentapeptide (lipid intermediate I) to form undecaprenyl-pyrophosphoryl-MurNAc-(pentapeptide)GlcNAc (lipid intermediate II). In Haemophilus influenzae (strain PittEE), this protein is UDP-N-acetylglucosamine--N-acetylmuramyl-(pentapeptide) pyrophosphoryl-undecaprenol N-acetylglucosamine transferase.